Here is a 715-residue protein sequence, read N- to C-terminus: Fatty acid oxidation complex subunit alpha (715 aa).

An enoyl-CoA hydratase/isomerase region spans residues 1–190 (MIYEGKAITV…KVGAVDAVVA (190 aa)). Residue aspartate 297 participates in substrate binding. Positions 312–715 (HDVKQAAVLG…MAKNGQRFFN (404 aa)) are 3-hydroxyacyl-CoA dehydrogenase. NAD(+) contacts are provided by residues methionine 325, aspartate 344, 401 to 403 (VVE), lysine 408, and serine 430. Catalysis depends on histidine 451, which acts as the For 3-hydroxyacyl-CoA dehydrogenase activity. Asparagine 454 contributes to the NAD(+) binding site. Substrate-binding residues include asparagine 501 and tyrosine 660.

This sequence in the N-terminal section; belongs to the enoyl-CoA hydratase/isomerase family. The protein in the C-terminal section; belongs to the 3-hydroxyacyl-CoA dehydrogenase family. As to quaternary structure, heterotetramer of two alpha chains (FadB) and two beta chains (FadA).

It carries out the reaction a (3S)-3-hydroxyacyl-CoA + NAD(+) = a 3-oxoacyl-CoA + NADH + H(+). The enzyme catalyses a (3S)-3-hydroxyacyl-CoA = a (2E)-enoyl-CoA + H2O. The catalysed reaction is a 4-saturated-(3S)-3-hydroxyacyl-CoA = a (3E)-enoyl-CoA + H2O. It catalyses the reaction (3S)-3-hydroxybutanoyl-CoA = (3R)-3-hydroxybutanoyl-CoA. It carries out the reaction a (3Z)-enoyl-CoA = a 4-saturated (2E)-enoyl-CoA. The enzyme catalyses a (3E)-enoyl-CoA = a 4-saturated (2E)-enoyl-CoA. The protein operates within lipid metabolism; fatty acid beta-oxidation. Involved in the aerobic and anaerobic degradation of long-chain fatty acids via beta-oxidation cycle. Catalyzes the formation of 3-oxoacyl-CoA from enoyl-CoA via L-3-hydroxyacyl-CoA. It can also use D-3-hydroxyacyl-CoA and cis-3-enoyl-CoA as substrate. This Pseudomonas putida (Arthrobacter siderocapsulatus) protein is Fatty acid oxidation complex subunit alpha.